The sequence spans 1483 residues: Tyrosine-protein kinase BAZ1B (1483 aa).

Positions 20 to 126 constitute a WAC domain; sequence EPLFTIPHTQ…GEECDFEVGK (107 aa). Positions 145–212 are disordered; sequence EEATEKKSDG…TSLKKGERKW (68 aa). Basic and acidic residues-rich tracts occupy residues 148-165 and 172-195; these read TEKKSDGACDSPSSDKEN and DHQKKETVVKEDEGRRESINDRAR. 3 positions are modified to phosphoserine: Ser-152, Ser-158, and Ser-161. The short motif at 207–213 is the C motif element; sequence KGERKWA. Residue Thr-266 is modified to Phosphothreonine. The tract at residues 302-333 is disordered; it reads NPSTKRKNTGSPDRKPSKKSKTDNSSLSSPLN. Phosphoserine is present on residues Ser-330, Ser-345, Ser-347, Ser-349, Ser-361, and Ser-374. Disordered regions lie at residues 379-432 and 446-470; these read HTNF…KTPK and GTQKMTRAPRNSGGTPRTSSKPHKH. 2 stretches are compositionally biased toward basic residues: residues 384–395 and 423–432; these read IPKKGPPAKKPG and SPKKGLKTPK. Positions 533–586 form a coiled coil; the sequence is KRWASMSEEQRKEYLKKKREELKKKLKEKAKERREKEMLERLEKQKRYEDQELT. Residues 604-668 enclose the DDT domain; it reads NTLFGDVAMV…LQTLLQDEIA (65 aa). Phosphoserine occurs at positions 699, 705, 708, and 716. Residues 768–814 adopt a coiled-coil conformation; the sequence is TRQQMSAELWKERLAVLKEENDKKRAEKQKRKEMEAKNKENGKVENG. Residues 788-810 are compositionally biased toward basic and acidic residues; the sequence is NDKKRAEKQKRKEMEAKNKENGK. Residues 788 to 817 are disordered; that stretch reads NDKKRAEKQKRKEMEAKNKENGKVENGLGK. Lys-826 participates in a covalent cross-link: Glycyl lysine isopeptide (Lys-Gly) (interchain with G-Cter in SUMO1); alternate. Residue Lys-826 forms a Glycyl lysine isopeptide (Lys-Gly) (interchain with G-Cter in SUMO2); alternate linkage. A coiled-coil region spans residues 850–893; sequence IQAKKEREIQEREMKVKLERQAEEERIRKHKAAAEKAFQEGIAK. A Glycyl lysine isopeptide (Lys-Gly) (interchain with G-Cter in SUMO2) cross-link involves residue Lys-853. Residue Ser-947 is modified to Phosphoserine. Glycyl lysine isopeptide (Lys-Gly) (interchain with G-Cter in SUMO2) cross-links involve residues Lys-1043, Lys-1089, and Lys-1107. A PHD-type zinc finger spans residues 1184–1234; that stretch reads NARCKVCRKKGEDDKLILCDECNKAFHLFCLRPALYEVPDGEWQCPACQPA. The disordered stretch occupies residues 1237–1326; that stretch reads RRNSRGRNYT…PKAPPVDDAE (90 aa). Residues 1245-1283 adopt a coiled-coil conformation; the sequence is YTEESASEDSEDDESDEEEEEEEEEEEEEDYEVAGLRLR. The segment covering 1249 to 1276 has biased composition (acidic residues); sequence SASEDSEDDESDEEEEEEEEEEEEEDYE. 2 stretches are compositionally biased toward basic residues: residues 1282–1292 and 1301–1316; these read LRPRKTIRGKH and SGRRPGKKPHSTRRSQ. Ser-1315 carries the post-translational modification Phosphoserine. Lys-1335 bears the N6-acetyllysine mark. The Bromo domain occupies 1339–1443; that stretch reads RRQSLELQKC…QCLVALLHKH (105 aa). Phosphoserine occurs at positions 1342 and 1468. A disordered region spans residues 1455-1483; sequence KKFPDRLAEDEGDSEPEAVGQSRGRRQKK.

This sequence belongs to the WAL family. BAZ1B subfamily. Component of the WICH-1 ISWI chromatin remodeling complex, at least composed of SMARCA1 and BAZ1B/WSTF, which regulates the spacing of histone octamers on the DNA template to facilitate access to DNA. Within the WICH-1 ISWI chromatin remodeling complex interacts with SMARCA1; the interaction is direct. Component of the WICH-5 ISWI chromatin remodeling complex (also called the WICH complex), at least composed of SMARCA5/SNF2H and BAZ1B/WSTF, which regulates the spacing of histone octamers on the DNA template to facilitate access to DNA. Within the WICH-5 ISWI chromatin remodeling complex interacts with SMARCA5/SNF2H; the interaction is direct. Component of the B-WICH chromatin remodeling complex, at least composed of SMARCA5/SNF2H, BAZ1B/WSTF, SF3B1, DEK, MYO1C, ERCC6, MYBBP1A and DDX21. Within the B-WICH chromatin remodeling complex, interacts with SMARCA5/SNF2H, DDX21, DEK, MYBBP1A, SF3B1, ERCC6 and MYO1C. Interacts with PCNA; the interaction is direct and is required for BAZ1B/WSTF binding to replication foci during S phase. Interacts with CDT1. It depends on Mn(2+) as a cofactor. As to expression, ubiquitously expressed with high levels of expression in heart, brain, placenta, skeletal muscle and ovary.

The protein localises to the nucleus. It catalyses the reaction L-tyrosyl-[protein] + ATP = O-phospho-L-tyrosyl-[protein] + ADP + H(+). In terms of biological role, atypical tyrosine-protein kinase that plays a central role in chromatin remodeling and acts as a transcription regulator. Involved in DNA damage response by phosphorylating 'Tyr-142' of histone H2AX (H2AXY142ph). H2AXY142ph plays a central role in DNA repair and acts as a mark that distinguishes between apoptotic and repair responses to genotoxic stress. Regulatory subunit of the ATP-dependent WICH-1 and WICH-5 ISWI chromatin remodeling complexes, which form ordered nucleosome arrays on chromatin and facilitate access to DNA during DNA-templated processes such as DNA replication, transcription, and repair. Both complexes regulate the spacing of nucleosomes along the chromatin and have the ability to slide mononucleosomes to the center of a DNA template. The WICH-1 ISWI chromatin remodeling complex has a lower ATP hydrolysis rate than the WICH-5 ISWI chromatin remodeling complex. The WICH-5 ISWI chromatin-remodeling complex regulates the transcription of various genes, has a role in RNA polymerase I transcription. Within the B-WICH complex has a role in RNA polymerase III transcription. Mediates the recruitment of the WICH-5 ISWI chromatin remodeling complex to replication foci during DNA replication. This Homo sapiens (Human) protein is Tyrosine-protein kinase BAZ1B (BAZ1B).